The chain runs to 852 residues: Transient receptor potential cation channel subfamily V member 4 (852 aa).

At 1 to 455 (MADPEDPRDA…RDKWRKFGAV (455 aa)) the chain is on the cytoplasmic side. A disordered region spans residues 30–51 (VEDTPSPAEPSRGPPGAVDGKQ). Residues K178, K183, N187, 222-225 (YRGQ), and R234 contribute to the ATP site. ANK repeat units follow at residues 223–252 (RGQT…DVHA) and 270–299 (FGEL…KQAD). A 1,2-diacyl-sn-glycero-3-phospho-(1D-myo-inositol-4,5-bisphosphate) contacts are provided by residues 235–237 (RCK), 282–285 (NQPH), and K330. The ANK 3 repeat unit spans residues 355-387 (DGLSPLMMAAKTGKIGIFQHIIRREIADEDVRH). Residues 456-476 (SFYISVVSYLCAMIIFTLIAY) form a helical membrane-spanning segment. Residues 477-493 (YRPMEGPPPYPYTTTID) lie on the Extracellular side of the membrane. The helical transmembrane segment at 494–520 (YLRLAGEIITLLTGILFFFSNIKDLFM) threads the bilayer. At 521-533 (KKCPGVNSFFIDG) the chain is on the cytoplasmic side. Residues 534-554 (SFQLLYFIYSVLVIVTAGLYL) form a helical membrane-spanning segment. Residues 555-558 (GGVE) lie on the Extracellular side of the membrane. The helical transmembrane segment at 559 to 579 (AYLAVMVFALVLGWMNALYFT) threads the bilayer. Residues 580 to 594 (RGLKLTGTYSIMIQK) lie on the Cytoplasmic side of the membrane. A helical membrane pass occupies residues 595 to 622 (ILFKDLFRFLLVYLLFMIGYASALVSLL). At 623-651 (NPCPSSESCSEDHSNCTLPTYPSCRDSQT) the chain is on the extracellular side. Positions 652 to 671 (FSTFLLDLFKLTIGMGDLEM) form an intramembrane region, pore-forming. The Selectivity filter motif lies at 665 to 668 (GMGD). D668 contacts Ca(2+). Residues 672 to 679 (LESAKYPG) are Extracellular-facing. A helical membrane pass occupies residues 680-708 (VFIILLVTYIILTFVLLLNMLIALMGETV). The Cytoplasmic portion of the chain corresponds to 709-852 (GQVSKESKHI…RHGQTPSSPL (144 aa)).

It belongs to the transient receptor (TC 1.A.4) family. TrpV subfamily. TRPV4 sub-subfamily. As to quaternary structure, homotetramer. Interacts with Ca(2+)-calmodulin.

It is found in the apical cell membrane. The protein resides in the cell junction. It localises to the adherens junction. It catalyses the reaction Ca(2+)(in) = Ca(2+)(out). With respect to regulation, ATP binding enhances channel sensitivity to agonists. Ca(2+)-calmodulin prevents the ATP-mediated increased sensitivity to agonists. Functionally, non-selective calcium permeant cation channel involved in osmotic sensitivity and mechanosensitivity. Activation by exposure to hypotonicity within the physiological range exhibits an outward rectification. Also activated by phorbol esters. Channel activity seems to be regulated by a calmodulin-dependent mechanism. The polypeptide is Transient receptor potential cation channel subfamily V member 4 (TRPV4) (Gallus gallus (Chicken)).